Reading from the N-terminus, the 198-residue chain is tRNA(Phe) 7-((3-amino-3-carboxypropyl)-4-demethylwyosine(37)-N(4))-methyltransferase 1 (198 aa).

The protein belongs to the TYW3 family.

The enzyme catalyses 4-demethyl-7-[(3S)-3-amino-3-carboxypropyl]wyosine(37) in tRNA(Phe) + S-adenosyl-L-methionine = 7-[(3S)-3-amino-3-carboxypropyl]wyosine(37) in tRNA(Phe) + S-adenosyl-L-homocysteine + H(+). Functionally, S-adenosyl-L-methionine-dependent methyltransferase that acts as a component of the wyosine derivatives biosynthesis pathway. Probably methylates N-4 position of wybutosine-86 to produce wybutosine-72. The protein is tRNA(Phe) 7-((3-amino-3-carboxypropyl)-4-demethylwyosine(37)-N(4))-methyltransferase 1 of Thermococcus kodakarensis (strain ATCC BAA-918 / JCM 12380 / KOD1) (Pyrococcus kodakaraensis (strain KOD1)).